Reading from the N-terminus, the 184-residue chain is dCTP deaminase (184 aa).

DCTP contacts are provided by residues 107-112, 131-133, Gln-152, Tyr-166, and Gln-176; these read KSTYAR and TLE. Catalysis depends on Glu-133, which acts as the Proton donor/acceptor.

It belongs to the dCTP deaminase family. In terms of assembly, homotrimer.

It catalyses the reaction dCTP + H2O + H(+) = dUTP + NH4(+). The protein operates within pyrimidine metabolism; dUMP biosynthesis; dUMP from dCTP (dUTP route): step 1/2. Its function is as follows. Catalyzes the deamination of dCTP to dUTP. This is dCTP deaminase from Rhodospirillum centenum (strain ATCC 51521 / SW).